A 156-amino-acid polypeptide reads, in one-letter code: Superoxide dismutase [Cu-Zn] 2 (156 aa).

Cu cation-binding residues include histidine 47, histidine 49, and histidine 64. Cysteine 58 and cysteine 147 form a disulfide bridge. Histidine 64, histidine 72, histidine 81, and aspartate 84 together coordinate Zn(2+). Histidine 121 is a Cu cation binding site.

The protein belongs to the Cu-Zn superoxide dismutase family. As to quaternary structure, homodimer. Cu cation serves as cofactor. The cofactor is Zn(2+).

It is found in the cytoplasm. The catalysed reaction is 2 superoxide + 2 H(+) = H2O2 + O2. Its function is as follows. Destroys radicals which are normally produced within the cells and which are toxic to biological systems. The chain is Superoxide dismutase [Cu-Zn] 2 (SODCC.2) from Mesembryanthemum crystallinum (Common ice plant).